We begin with the raw amino-acid sequence, 164 residues long: Flavodoxin (164 aa).

The Flavodoxin-like domain maps to 4 to 160; the sequence is IGIFFGTDSG…RISKWVEQVK (157 aa).

The protein belongs to the flavodoxin family. It depends on FMN as a cofactor.

Low-potential electron donor to a number of redox enzymes. The polypeptide is Flavodoxin (fldA) (Helicobacter pylori (strain ATCC 700392 / 26695) (Campylobacter pylori)).